Here is a 148-residue protein sequence, read N- to C-terminus: 3-dehydroquinate dehydratase (148 aa).

The active-site Proton acceptor is the Tyr24. Substrate is bound by residues Asn75, His81, and Asp88. The Proton donor role is filled by His101. Substrate contacts are provided by residues Leu102–Ser103 and Arg112.

This sequence belongs to the type-II 3-dehydroquinase family. As to quaternary structure, homododecamer.

The catalysed reaction is 3-dehydroquinate = 3-dehydroshikimate + H2O. Its pathway is metabolic intermediate biosynthesis; chorismate biosynthesis; chorismate from D-erythrose 4-phosphate and phosphoenolpyruvate: step 3/7. Its function is as follows. Catalyzes a trans-dehydration via an enolate intermediate. This chain is 3-dehydroquinate dehydratase, found in Sinorhizobium medicae (strain WSM419) (Ensifer medicae).